The following is a 600-amino-acid chain: Glutamine--fructose-6-phosphate aminotransferase [isomerizing] (600 aa).

Cys2 (nucleophile; for GATase activity) is an active-site residue. The 216-residue stretch at 2–217 folds into the Glutamine amidotransferase type-2 domain; sequence CGIVGFIGEQ…DKEIVIVTKE (216 aa). 2 SIS domains span residues 283 to 422 and 452 to 590; these read IRNA…AKGE and LAKQ…VDKP. The active-site For Fru-6P isomerization activity is the Lys595.

As to quaternary structure, homodimer.

The protein localises to the cytoplasm. The enzyme catalyses D-fructose 6-phosphate + L-glutamine = D-glucosamine 6-phosphate + L-glutamate. Functionally, catalyzes the first step in hexosamine metabolism, converting fructose-6P into glucosamine-6P using glutamine as a nitrogen source. The protein is Glutamine--fructose-6-phosphate aminotransferase [isomerizing] of Bacillus cereus (strain ATCC 10987 / NRS 248).